A 738-amino-acid polypeptide reads, in one-letter code: MPEIEQDDAAAETVDSSTVKFGTPEALEYVRSLTDVGAMTRLLHECIAYQRSLDSDLDTLLSQRTELDRNLVQLQRSAEILDIVKADADHMLGNVRSTCDLADQVSGKVRELDLAQSRVNVTLSRIDAIVERGNCIEGVKTALESEDYESAAKFVQRFLQIDLQYKDSGSDQSEQLHASKEQLEGIAKKKLLAAIDQRDHPTILRFVRLYSPLGMETEGLQLYVGYLKKVIALRGRMEYENVVELMEQGLGQVNFVGCLTNLFKDIVMAIEENDEILRGLCGEDGVAYAICELQEECDLRGSLILKKYMDFRKLAILASDINNSPNLNILPGGASEGPDPREVELYVEEILSLMQLGEDYTEFMVSKIKSLTSVDPELLPTATKAFRNKSFSKAIQDVTRYYVILEGFFMVENVRKAIRIDEHVPDSLTTSMVDDVFYVLQSCLRRAISTSNISSVIAVLSYAGSLLGNDYHEALQQKIREPNLGARLFLGGIGVENTGTEIATALNNMDVSCEYILKLKHEIEEQCTEVFPAPADRERIKSCLSELGELSSTFKQLLNSGMEQLVATVTPRIRPVLDTVATISYELTETEYAENEVNDPWVQRLLHSVETNAAWLQPLMTSNNYDSFLHLIIDFIVKRLEVIMMQKRFSQLGGLQLDRDTRALVSHFSGMTQRTVRDKFARLTQMATILNLEKVSEILDFWGENSGPMTWRLTPAEVRRVLGLRVEFKPESIAALKL.

Belongs to the COG4 family. In terms of assembly, component of the conserved oligomeric Golgi complex which is composed of eight different subunits and is required for normal Golgi morphology and localization. Interacts with COG2 and COG3.

The protein resides in the golgi apparatus membrane. Required for normal Golgi function. The protein is Conserved oligomeric Golgi complex subunit 4 of Arabidopsis thaliana (Mouse-ear cress).